The following is a 538-amino-acid chain: RNA-binding protein RO60 (538 aa).

M1 is subject to N-acetylmethionine. S4 and S19 each carry phosphoserine. Residues 16–369 form the TROVE domain; the sequence is IANSQDGYVW…TFKTVEPTGK (354 aa). Residues 120–284 are RNA-binding; it reads RIPTHLFTFI…EMPLTALLRN (165 aa). Residues K224 and K359 each carry the N6-acetyllysine modification. The tract at residues 361–538 is VWFA-like domain; the sequence is FKTVEPTGKR…VIRNFTLDMI (178 aa). 3 residues coordinate a divalent metal cation: S378, S380, and T445.

This sequence belongs to the Ro 60 kDa family. In terms of assembly, identified in a IGF2BP1-dependent mRNP granule complex containing untranslated mRNAs. Found in a complex with PUF60 and Y5 RNA. Interacts with RAB11FIP5.

It localises to the cytoplasm. Functionally, RNA-binding protein that binds to misfolded non-coding RNAs, pre-5S rRNA, and several small cytoplasmic RNA molecules known as Y RNAs. Binds to endogenous Alu retroelements which are induced by type I interferon and stimulate porinflammatory cytokine secretion. Regulates the expression of Alu retroelements as well as inflammatory genes. May play roles in cilia formation and/or maintenance. This chain is RNA-binding protein RO60, found in Homo sapiens (Human).